A 442-amino-acid polypeptide reads, in one-letter code: Choline monooxygenase, chloroplastic (442 aa).

Residues 1–58 (MASSASMLINYPTTFCGVRNSSNPNNDQFSDQINIPSSLNNNINISKITSKTNKIIPK) constitute a chloroplast transit peptide. In terms of domain architecture, Rieske spans 123-229 (WQVAGYSDQI…VAIWGPFVLI (107 aa)). [2Fe-2S] cluster is bound by residues C165, H167, C184, and H187. Positions 290 and 295 each coordinate Fe cation.

It belongs to the choline monooxygenase family. [2Fe-2S] cluster is required as a cofactor. Fe cation serves as cofactor. The cofactor is Mg(2+).

It is found in the plastid. Its subcellular location is the chloroplast stroma. It catalyses the reaction choline + 2 reduced [2Fe-2S]-[ferredoxin] + O2 + 2 H(+) = betaine aldehyde hydrate + 2 oxidized [2Fe-2S]-[ferredoxin] + H2O. The protein operates within amine and polyamine biosynthesis; betaine biosynthesis via choline pathway; betaine aldehyde from choline (monooxygenase route): step 1/1. Catalyzes the first step of the osmoprotectant glycine betaine synthesis. In Amaranthus tricolor (Joseph's coat), this protein is Choline monooxygenase, chloroplastic (CMO).